A 190-amino-acid polypeptide reads, in one-letter code: Ribosome maturation factor RimM (190 aa).

One can recognise a PRC barrel domain in the interval 95–177 (EDDEFFYTDL…AGLIDSPDDL (83 aa)). The tract at residues 170 to 190 (LIDSPDDLTGKPPKPPGKTKE) is disordered. Pro residues predominate over residues 181 to 190 (PPKPPGKTKE).

The protein belongs to the RimM family. In terms of assembly, binds ribosomal protein uS19.

The protein localises to the cytoplasm. Its function is as follows. An accessory protein needed during the final step in the assembly of 30S ribosomal subunit, possibly for assembly of the head region. Essential for efficient processing of 16S rRNA. May be needed both before and after RbfA during the maturation of 16S rRNA. It has affinity for free ribosomal 30S subunits but not for 70S ribosomes. The protein is Ribosome maturation factor RimM of Rhizobium rhizogenes (strain K84 / ATCC BAA-868) (Agrobacterium radiobacter).